We begin with the raw amino-acid sequence, 222 residues long: MIF4G domain-containing protein (222 aa).

The MIF4G domain occupies 3–205 (EASRDEYKIQ…LEIIEFRAAG (203 aa)).

The protein belongs to the MIF4GD family. Interacts with EIF4G1, EIF4G2 and SLBP; probably tethered by SLBP to the 3'-end of mRNAs ending with the histone stem-loop, it also interacts with EIF4G1 which is bound to their 5'-end.

Its subcellular location is the cytoplasm. The protein localises to the nucleus. Functionally, functions in replication-dependent translation of histone mRNAs which differ from other eukaryotic mRNAs in that they do not end with a poly-A tail but a stem-loop. May participate in circularizing those mRNAs specifically enhancing their translation. In Rattus norvegicus (Rat), this protein is MIF4G domain-containing protein (Mif4gd).